We begin with the raw amino-acid sequence, 376 residues long: Glutamate 5-kinase (376 aa).

Lys17 provides a ligand contact to ATP. Substrate contacts are provided by Ser56, Asp144, and Asn156. ATP contacts are provided by residues 176–177 and 218–224; these read TD and TGGMQSK. The PUA domain occupies 283-359; that stretch reads KGTLLLDAGA…QSREIASVLK (77 aa).

This sequence belongs to the glutamate 5-kinase family.

The protein localises to the cytoplasm. The enzyme catalyses L-glutamate + ATP = L-glutamyl 5-phosphate + ADP. The protein operates within amino-acid biosynthesis; L-proline biosynthesis; L-glutamate 5-semialdehyde from L-glutamate: step 1/2. Its function is as follows. Catalyzes the transfer of a phosphate group to glutamate to form L-glutamate 5-phosphate. This Desulfotalea psychrophila (strain LSv54 / DSM 12343) protein is Glutamate 5-kinase.